The chain runs to 138 residues: MYIEQHSRYQNKANNIQLEYDDRQFHTTVIKDVLLWIEHNLDQSLLLDDVANKAGYTKWYFQRLFKKVTGVTLASYIRARRLTKAAVELRLTKKTILEIALKYQFDSQQSFTRRFKYIFKVTPSYYRRNKLWELEAMH.

The HTH araC/xylS-type domain maps to 31–129; the sequence is KDVLLWIEHN…KVTPSYYRRN (99 aa). DNA-binding regions (H-T-H motif) lie at residues 48-69 and 96-119; these read DDVA…KKVT and ILEI…KYIF.

The chain is Transposon Tn10 TetD protein (tetD) from Escherichia coli.